Here is a 395-residue protein sequence, read N- to C-terminus: MHGVTMKKISIFGATGSIGQSTIDLIRRAPDAYDVVALSGGHNVAQLARDAIELQADIAITAHDARLEELRSALAGSGVEAASGAAALVEAASRPADWIMSAIVGAAGLAPGLKALEQGTTLALANKESLVCAGALLMQTAADHGARILPVDSEHSAVFQALVGERIEEVERIIITASGGAFRDWPLERLKTASLAEASSHPNWDMGQRITIDSASMFNKALEVIETREFFGVAPEQIEVLVHPQSLVHALVGFRDGALMSHLGAPDMRHAIGYALHWPDRNALPVARLDLAAIGQLEFRAPDLQRYPALRLAQEVMRRGGLSGAAFNGAKERALDHFIAGRIGFLDMASLTEEGLATLEAQPGLIDASMTLENVTRVDDLARRAVDQVVTQRTG.

7 residues coordinate NADPH: Thr-15, Gly-16, Ser-17, Ile-18, Gly-41, Asn-43, and Asn-126. Lys-127 lines the 1-deoxy-D-xylulose 5-phosphate pocket. NADPH is bound at residue Glu-128. Position 152 (Asp-152) interacts with Mn(2+). The 1-deoxy-D-xylulose 5-phosphate site is built by Ser-153, Glu-154, Ser-178, and His-201. Glu-154 is a binding site for Mn(2+). Gly-207 serves as a coordination point for NADPH. Ser-214, Asn-219, Lys-220, and Glu-223 together coordinate 1-deoxy-D-xylulose 5-phosphate. Position 223 (Glu-223) interacts with Mn(2+).

Belongs to the DXR family. Mg(2+) serves as cofactor. Requires Mn(2+) as cofactor.

The enzyme catalyses 2-C-methyl-D-erythritol 4-phosphate + NADP(+) = 1-deoxy-D-xylulose 5-phosphate + NADPH + H(+). It functions in the pathway isoprenoid biosynthesis; isopentenyl diphosphate biosynthesis via DXP pathway; isopentenyl diphosphate from 1-deoxy-D-xylulose 5-phosphate: step 1/6. Functionally, catalyzes the NADPH-dependent rearrangement and reduction of 1-deoxy-D-xylulose-5-phosphate (DXP) to 2-C-methyl-D-erythritol 4-phosphate (MEP). This is 1-deoxy-D-xylulose 5-phosphate reductoisomerase from Ruegeria sp. (strain TM1040) (Silicibacter sp.).